Consider the following 61-residue polypeptide: [Val1,Thr6]-bradykinyl-Gln,Ser (61 aa).

Residues 1-22 (MSILKKSLFLVLFLGLVSFSIC) form the signal peptide. Positions 23-50 (EEEKREAEEEENEDEIEEQSEEKKRFEP) are excised as a propeptide. Residues 25–61 (EKREAEEEENEDEIEEQSEEKKRFEPVPPGFTPFRQS) form a disordered region. Over residues 30–42 (EEEENEDEIEEQS) the composition is skewed to acidic residues. Pro52 carries the 4-hydroxyproline; in form [Val1,Hyp2,Thr6]-Bradykinyl-Gln,Ser and [Val1,Hyp2,Thr6]-Bradykinin modification.

The protein belongs to the frog skin active peptide (FSAP) family. Bradykinin-related peptide subfamily. As to expression, expressed by the skin glands.

It is found in the secreted. Its function is as follows. Induces contraction of rat ileum smooth muscle (EC(50)=2.73 uM) but has no activity towards smooth muscle from tail artery, urinary bladder or uterus up to concentrations of 100 uM. Binds to both bradykinin receptor B1 (BDKRB1) and B2 (BDKRB2); the effect via BDKRB1 is stronger. Functionally, [Val1,Hyp2,Thr6]-bradykinin-Gln,Ser: Induces contraction of rat ileum smooth muscle (EC(50)=710 nM) but has no activity towards smooth muscle from tail artery, urinary bladder or uterus up to concentrations of 100 uM. Binds to both bradykinin receptor B1 (BDKRB1) and B2 (BDKRB2); the effect via BDKRB1 is stronger. Induces contraction of guinea pig ileum smooth muscle. This chain is [Val1,Thr6]-bradykinyl-Gln,Ser, found in Pithecopus hypochondrialis (Orange-legged leaf frog).